A 120-amino-acid chain; its full sequence is NAD(P)H-quinone oxidoreductase subunit 3, chloroplastic (120 aa).

3 consecutive transmembrane segments (helical) span residues 9–29, 64–84, and 88–108; these read IFWA…LISG, MFAL…PWAM, and VLGV…IVGS.

The protein belongs to the complex I subunit 3 family. As to quaternary structure, NDH is composed of at least 16 different subunits, 5 of which are encoded in the nucleus.

The protein resides in the plastid. Its subcellular location is the chloroplast thylakoid membrane. The catalysed reaction is a plastoquinone + NADH + (n+1) H(+)(in) = a plastoquinol + NAD(+) + n H(+)(out). It catalyses the reaction a plastoquinone + NADPH + (n+1) H(+)(in) = a plastoquinol + NADP(+) + n H(+)(out). Its function is as follows. NDH shuttles electrons from NAD(P)H:plastoquinone, via FMN and iron-sulfur (Fe-S) centers, to quinones in the photosynthetic chain and possibly in a chloroplast respiratory chain. The immediate electron acceptor for the enzyme in this species is believed to be plastoquinone. Couples the redox reaction to proton translocation, and thus conserves the redox energy in a proton gradient. This is NAD(P)H-quinone oxidoreductase subunit 3, chloroplastic from Phaseolus vulgaris (Kidney bean).